The following is a 292-amino-acid chain: Protein/nucleic acid deglycase HchA (292 aa).

Residues 1 to 12 (MSQDVNELSKQP) show a composition bias toward polar residues. The disordered stretch occupies residues 1–23 (MSQDVNELSKQPTPDKAEDNAFF). The active-site Nucleophile is the Cys-190.

Belongs to the peptidase C56 family. HchA subfamily.

The protein localises to the cytoplasm. It carries out the reaction N(omega)-(1-hydroxy-2-oxopropyl)-L-arginyl-[protein] + H2O = lactate + L-arginyl-[protein] + H(+). The enzyme catalyses N(6)-(1-hydroxy-2-oxopropyl)-L-lysyl-[protein] + H2O = lactate + L-lysyl-[protein] + H(+). It catalyses the reaction S-(1-hydroxy-2-oxopropyl)-L-cysteinyl-[protein] + H2O = lactate + L-cysteinyl-[protein] + H(+). The catalysed reaction is N(omega)-(1-hydroxy-2-oxoethyl)-L-arginyl-[protein] + H2O = L-arginyl-[protein] + glycolate + H(+). It carries out the reaction N(6)-(1-hydroxy-2-oxoethyl)-L-lysyl-[protein] + H2O = glycolate + L-lysyl-[protein] + H(+). The enzyme catalyses S-(1-hydroxy-2-oxoethyl)-L-cysteinyl-[protein] + H2O = glycolate + L-cysteinyl-[protein] + H(+). It catalyses the reaction N(2)-(1-hydroxy-2-oxopropyl)-dGTP + H2O = lactate + dGTP + H(+). The catalysed reaction is N(2)-(1-hydroxy-2-oxopropyl)-GTP + H2O = lactate + GTP + H(+). It carries out the reaction N(2)-(1-hydroxy-2-oxopropyl)-GDP + H2O = lactate + GDP + H(+). The enzyme catalyses N(2)-(1-hydroxy-2-oxopropyl)-GMP + H2O = lactate + GMP + H(+). It catalyses the reaction N(2)-(1-hydroxy-2-oxoethyl)-dGTP + H2O = dGTP + glycolate + H(+). The catalysed reaction is N(2)-(1-hydroxy-2-oxoethyl)-GTP + H2O = glycolate + GTP + H(+). It carries out the reaction N(2)-(1-hydroxy-2-oxoethyl)-GDP + H2O = glycolate + GDP + H(+). The enzyme catalyses N(2)-(1-hydroxy-2-oxoethyl)-GMP + H2O = glycolate + GMP + H(+). It catalyses the reaction an N(2)-(1-hydroxy-2-oxopropyl)-guanosine in RNA + H2O = a guanosine in RNA + lactate + H(+). The catalysed reaction is an N(2)-(1-hydroxy-2-oxopropyl)-2'-deoxyguanosine in DNA + H2O = a 2'-deoxyguanosine in DNA + lactate + H(+). It carries out the reaction an N(2)-(1-hydroxy-2-oxoethyl)-guanosine in RNA + H2O = a guanosine in RNA + glycolate + H(+). The enzyme catalyses an N(2)-(1-hydroxy-2-oxoethyl)-2'-deoxyguanosine in DNA + H2O = a 2'-deoxyguanosine in DNA + glycolate + H(+). Protein and nucleotide deglycase that catalyzes the deglycation of the Maillard adducts formed between amino groups of proteins or nucleotides and reactive carbonyl groups of glyoxals. Thus, functions as a protein deglycase that repairs methylglyoxal- and glyoxal-glycated proteins, and releases repaired proteins and lactate or glycolate, respectively. Deglycates cysteine, arginine and lysine residues in proteins, and thus reactivates these proteins by reversing glycation by glyoxals. Acts on early glycation intermediates (hemithioacetals and aminocarbinols), preventing the formation of Schiff bases and advanced glycation endproducts (AGE). Also functions as a nucleotide deglycase able to repair glycated guanine in the free nucleotide pool (GTP, GDP, GMP, dGTP) and in DNA and RNA. Is thus involved in a major nucleotide repair system named guanine glycation repair (GG repair), dedicated to reversing methylglyoxal and glyoxal damage via nucleotide sanitization and direct nucleic acid repair. Plays an important role in protecting cells from carbonyl stress. This is Protein/nucleic acid deglycase HchA from Staphylococcus aureus (strain Newman).